The sequence spans 486 residues: H2.0-like homeobox protein (486 aa).

Disordered stretches follow at residues 83 to 173 (ASFQ…SSKD) and 330 to 486 (KWRH…LGGL). Positions 125–135 (QQQQQQQQPQQ) are enriched in low complexity. The segment at residues 276 to 335 (RSWSRAVFSNLQRKGLEKRFEIQKYVTKPDRKQLAAMLGLTDAQVKVWFQNRRMKWRHSK) is a DNA-binding region (homeobox). Composition is skewed to basic and acidic residues over residues 334-349 (SKEA…EAGE) and 363-372 (EERSPSRSEG). A compositionally biased stretch (acidic residues) spans 373–383 (EAESESSDPES). A compositionally biased stretch (basic and acidic residues) spans 390–401 (DTERTEGTERSL). Residues 409–420 (ASAAGALLAASS) are compositionally biased toward low complexity. Residues 421–440 (GGSGGSGGGGGGGFNFGGLS) are compositionally biased toward gly residues. Residues 441-474 (SGSTTSAGSSGSHSSGGASELLPAPQPSLSSAPK) show a composition bias toward low complexity. Residues 475 to 486 (SPEPVPAPLGGL) are compositionally biased toward pro residues.

This sequence belongs to the H2.0 homeobox family.

It is found in the nucleus. Functionally, transcription factor required for TBX21/T-bet-dependent maturation of Th1 cells as well as maintenance of Th1-specific gene expression. Involved in embryogenesis and hematopoiesis. The protein is H2.0-like homeobox protein (HLX) of Bos taurus (Bovine).